We begin with the raw amino-acid sequence, 414 residues long: tRNA dimethylallyltransferase (414 aa).

33-40 (APTASGKT) provides a ligand contact to ATP. 35–40 (TASGKT) lines the substrate pocket. Interaction with substrate tRNA stretches follow at residues 58–61 (DSAL), 182–186 (QRITR), and 266–271 (RCVGYR).

Belongs to the IPP transferase family. As to quaternary structure, monomer. Mg(2+) serves as cofactor.

The enzyme catalyses adenosine(37) in tRNA + dimethylallyl diphosphate = N(6)-dimethylallyladenosine(37) in tRNA + diphosphate. Functionally, catalyzes the transfer of a dimethylallyl group onto the adenine at position 37 in tRNAs that read codons beginning with uridine, leading to the formation of N6-(dimethylallyl)adenosine (i(6)A). The sequence is that of tRNA dimethylallyltransferase from Psychrobacter cryohalolentis (strain ATCC BAA-1226 / DSM 17306 / VKM B-2378 / K5).